The following is a 536-amino-acid chain: Trigger factor (536 aa).

A PPIase FKBP-type domain is found at G164 to T249. Residues I439–K536 form a disordered region. The segment covering T472–A502 has biased composition (basic and acidic residues). A compositionally biased stretch (low complexity) spans K503–A515. The segment covering A516 to K525 has biased composition (basic and acidic residues). Residues A527–K536 show a composition bias toward basic residues.

This sequence belongs to the FKBP-type PPIase family. Tig subfamily.

Its subcellular location is the cytoplasm. The catalysed reaction is [protein]-peptidylproline (omega=180) = [protein]-peptidylproline (omega=0). In terms of biological role, involved in protein export. Acts as a chaperone by maintaining the newly synthesized protein in an open conformation. Functions as a peptidyl-prolyl cis-trans isomerase. This Sphingopyxis alaskensis (strain DSM 13593 / LMG 18877 / RB2256) (Sphingomonas alaskensis) protein is Trigger factor.